The chain runs to 748 residues: 5-methyltetrahydropteroyltriglutamate--homocysteine methyltransferase (748 aa).

Residue Lys-111 coordinates 5-methyltetrahydropteroyltri-L-glutamate. L-homocysteine-binding positions include 428 to 430 and Glu-478; that span reads IGS. L-methionine-binding positions include 428–430 and Glu-478; that span reads IGS. 5-methyltetrahydropteroyltri-L-glutamate is bound by residues 509–510 and Trp-555; that span reads RC. Asp-593 provides a ligand contact to L-homocysteine. Asp-593 is an L-methionine binding site. Position 599 (Glu-599) interacts with 5-methyltetrahydropteroyltri-L-glutamate. Residues His-635, Cys-637, and Glu-659 each contribute to the Zn(2+) site. The active-site Proton donor is His-687. Cys-719 is a binding site for Zn(2+).

It belongs to the vitamin-B12 independent methionine synthase family. It depends on Zn(2+) as a cofactor.

It catalyses the reaction 5-methyltetrahydropteroyltri-L-glutamate + L-homocysteine = tetrahydropteroyltri-L-glutamate + L-methionine. It functions in the pathway amino-acid biosynthesis; L-methionine biosynthesis via de novo pathway; L-methionine from L-homocysteine (MetE route): step 1/1. Catalyzes the transfer of a methyl group from 5-methyltetrahydrofolate to homocysteine resulting in methionine formation. The sequence is that of 5-methyltetrahydropteroyltriglutamate--homocysteine methyltransferase from Herpetosiphon aurantiacus (strain ATCC 23779 / DSM 785 / 114-95).